A 176-amino-acid chain; its full sequence is NAD(P)H-quinone oxidoreductase subunit 6, chloroplastic (176 aa).

5 helical membrane-spanning segments follow: residues 10-30 (FLLV…VLLP), 32-52 (PIYS…FYIL), 61-81 (AQLL…VMFM), 92-112 (LWTV…ISLI), and 152-172 (FFLP…GAIA).

Belongs to the complex I subunit 6 family. NDH is composed of at least 16 different subunits, 5 of which are encoded in the nucleus.

It is found in the plastid. Its subcellular location is the chloroplast thylakoid membrane. The enzyme catalyses a plastoquinone + NADH + (n+1) H(+)(in) = a plastoquinol + NAD(+) + n H(+)(out). The catalysed reaction is a plastoquinone + NADPH + (n+1) H(+)(in) = a plastoquinol + NADP(+) + n H(+)(out). NDH shuttles electrons from NAD(P)H:plastoquinone, via FMN and iron-sulfur (Fe-S) centers, to quinones in the photosynthetic chain and possibly in a chloroplast respiratory chain. The immediate electron acceptor for the enzyme in this species is believed to be plastoquinone. Couples the redox reaction to proton translocation, and thus conserves the redox energy in a proton gradient. The protein is NAD(P)H-quinone oxidoreductase subunit 6, chloroplastic (ndhG) of Solanum bulbocastanum (Wild potato).